A 330-amino-acid chain; its full sequence is MSQPIKIAISGGAGQIAYSLLFRLASGELFGPNQLIELQVLEVPNALSALEGVKMEIEDCAFPLLSSIKICSDPYQAFEDIDYALLIGAKSRGPGMERRDLLQENSKIFVNQGQALNAVAKSSAKIFVVGNPCNTNCLIALNNAPSLKRENFYAMTRLDQNRATFFLSQKSQVSTKDVSCVTIWGNHSATQVPDFVNAKISQKPVETIIPDRQWLEKDFIESVQKRGAAIIQARGKSSAASAASALLDAMRDRILPTPTGQWFSTALLSDGNPYGIEEGLIFSFPCRVKKNGELSIVSGLKWDAFLEEKIKLTEQELKEEREMVSSILKI.

11–17 (GGAGQIA) contributes to the NAD(+) binding site. Substrate contacts are provided by arginine 92 and arginine 98. Residues asparagine 105, glutamine 112, and 129-131 (VGN) each bind NAD(+). Substrate contacts are provided by asparagine 131 and arginine 162. The active-site Proton acceptor is histidine 187.

It belongs to the LDH/MDH superfamily. MDH type 2 family.

It carries out the reaction (S)-malate + NAD(+) = oxaloacetate + NADH + H(+). Its function is as follows. Catalyzes the reversible oxidation of malate to oxaloacetate. The protein is Malate dehydrogenase of Protochlamydia amoebophila (strain UWE25).